A 765-amino-acid polypeptide reads, in one-letter code: Protein transport protein Sec23A (765 aa).

Thr-2 is modified (N-acetylthreonine). Zn(2+) contacts are provided by Cys-61, Cys-66, Cys-85, and Cys-88. Position 308 is a phosphothreonine (Thr-308). One copy of the Gelsolin-like repeat lies at Pro-632–Leu-718.

Belongs to the SEC23/SEC24 family. SEC23 subfamily. As to quaternary structure, COPII is composed of at least five proteins: the Sec23/24 complex, the Sec13/31 complex and Sar1. Interacts with SEC23IP. Interacts with HTR4. Interacts with SEC16A. Interacts with SLC6A4. Interacts (as part of the Sec23/24 complex) with SEC22B; recruits SEC22B into COPII-coated vesicles and allows the transport of this cargo from the endoplasmic reticulum to the Golgi. Interacts (via Gelsolin-like repeat) with MIA2 and MIA3; specifically involved in the transport of large cargos like the collagen COL7A1. Interacts with DDHD1. Interacts with TMEM39A. Interacts with SACM1L; this interaction is reduced in the absence of TMEM39A. Interacts with kinase FAM20C; transport of FAM20C from the endoplasmic reticulum to the Golgi is likely to be mediated by COPII vesicles.

It localises to the cytoplasmic vesicle. The protein localises to the COPII-coated vesicle membrane. Its subcellular location is the endoplasmic reticulum membrane. It is found in the cytoplasm. The protein resides in the cytosol. Functionally, component of the coat protein complex II (COPII) which promotes the formation of transport vesicles from the endoplasmic reticulum (ER). The coat has two main functions, the physical deformation of the endoplasmic reticulum membrane into vesicles and the selection of cargo molecules for their transport to the Golgi complex. Required for the translocation of insulin-induced glucose transporter SLC2A4/GLUT4 to the cell membrane. The polypeptide is Protein transport protein Sec23A (Pongo abelii (Sumatran orangutan)).